A 542-amino-acid polypeptide reads, in one-letter code: Doublesex- and mab-3-related transcription factor A2 (542 aa).

Residues 70–117 constitute a DNA-binding region (DM); that stretch reads CARCRNHGVVSALKGHKRYCRWKDCLCAKCTLIAERQRVMAAQVALRR. The interval 201–316 is disordered; the sequence is LQAGRPGSPL…GGSGPRQRTP (116 aa). A DMA domain is found at 314–349; sequence RTPLDILTRVFPGHRRGVLELVLQGCGGDVVQAIEQ.

It belongs to the DMRT family. Expressed in testis.

The protein localises to the nucleus. Its function is as follows. May be involved in sexual development. The sequence is that of Doublesex- and mab-3-related transcription factor A2 (DMRTA2) from Homo sapiens (Human).